The primary structure comprises 890 residues: Alanine--tRNA ligase (890 aa).

Positions 578, 582, 689, and 693 each coordinate Zn(2+).

The protein belongs to the class-II aminoacyl-tRNA synthetase family. Zn(2+) serves as cofactor.

The protein resides in the cytoplasm. It carries out the reaction tRNA(Ala) + L-alanine + ATP = L-alanyl-tRNA(Ala) + AMP + diphosphate. Catalyzes the attachment of alanine to tRNA(Ala) in a two-step reaction: alanine is first activated by ATP to form Ala-AMP and then transferred to the acceptor end of tRNA(Ala). Also edits incorrectly charged Ser-tRNA(Ala) and Gly-tRNA(Ala) via its editing domain. This Deinococcus radiodurans (strain ATCC 13939 / DSM 20539 / JCM 16871 / CCUG 27074 / LMG 4051 / NBRC 15346 / NCIMB 9279 / VKM B-1422 / R1) protein is Alanine--tRNA ligase.